The sequence spans 61 residues: Type IV secretion system protein PtlI homolog (61 aa).

A signal peptide spans 1–25 (MIHAHSNARLLRWAILAIAPATLGA). The tract at residues 29-61 (NGPPGLPYPDGKPLIPINTAAPEQGSSCQTRAP) is disordered. Polar residues predominate over residues 52-61 (QGSSCQTRAP).

This Bordetella bronchiseptica (strain ATCC BAA-588 / NCTC 13252 / RB50) (Alcaligenes bronchisepticus) protein is Type IV secretion system protein PtlI homolog (ptlI).